The chain runs to 333 residues: Porphobilinogen deaminase (333 aa).

At cysteine 255 the chain carries S-(dipyrrolylmethanemethyl)cysteine.

This sequence belongs to the HMBS family. As to quaternary structure, monomer. The cofactor is dipyrromethane.

The catalysed reaction is 4 porphobilinogen + H2O = hydroxymethylbilane + 4 NH4(+). The protein operates within porphyrin-containing compound metabolism; protoporphyrin-IX biosynthesis; coproporphyrinogen-III from 5-aminolevulinate: step 2/4. Functionally, tetrapolymerization of the monopyrrole PBG into the hydroxymethylbilane pre-uroporphyrinogen in several discrete steps. The sequence is that of Porphobilinogen deaminase from Burkholderia vietnamiensis (strain G4 / LMG 22486) (Burkholderia cepacia (strain R1808)).